A 97-amino-acid polypeptide reads, in one-letter code: Small ribosomal subunit protein bS20c (97 aa).

Polar residues predominate over residues 1 to 15 (MSKNVSAIKKNQVSL). The segment at 1 to 20 (MSKNVSAIKKNQVSLRNKRK) is disordered.

This sequence belongs to the bacterial ribosomal protein bS20 family.

It is found in the plastid. It localises to the chloroplast. Binds directly to 16S ribosomal RNA. The chain is Small ribosomal subunit protein bS20c from Gracilaria tenuistipitata var. liui (Red alga).